We begin with the raw amino-acid sequence, 576 residues long: Citrinin biosynthesis transcriptional activator ctnR (576 aa).

Residues 1–27 (MLSHEMASTAHRQPSRPTTRQRQRTGR) form a disordered region. A DNA-binding region (zn(2)-C6 fungal-type) is located at residues 29 to 56 (CEECRRRKLRCDGQQPRCGVCVDSGVTC). Residues 102–148 (STPLTNDHHDGCSVSSASSRSDSNPPPTVSEPDMSLPNTTTSVSSAP) form a disordered region. The segment covering 114–124 (SVSSASSRSDS) has biased composition (low complexity). The segment covering 137-148 (LPNTTTSVSSAP) has biased composition (polar residues).

It is found in the nucleus. Transcription factor that regulates the expression of the gene cluster that mediates the biosynthesis of the mycotoxin citrinin, a hepato-nephrotoxic compound to humans due to inhibition of respiration complex III. The chain is Citrinin biosynthesis transcriptional activator ctnR from Monascus purpureus (Red mold).